The primary structure comprises 178 residues: ATP synthase subunit b (178 aa).

Residues 11 to 31 (IIPEPVEIVVGLVAFLLLLFV) form a helical membrane-spanning segment.

This sequence belongs to the ATPase B chain family. In terms of assembly, F-type ATPases have 2 components, F(1) - the catalytic core - and F(0) - the membrane proton channel. F(1) has five subunits: alpha(3), beta(3), gamma(1), delta(1), epsilon(1). F(0) has three main subunits: a(1), b(2) and c(10-14). The alpha and beta chains form an alternating ring which encloses part of the gamma chain. F(1) is attached to F(0) by a central stalk formed by the gamma and epsilon chains, while a peripheral stalk is formed by the delta and b chains.

It localises to the cell membrane. Functionally, f(1)F(0) ATP synthase produces ATP from ADP in the presence of a proton or sodium gradient. F-type ATPases consist of two structural domains, F(1) containing the extramembraneous catalytic core and F(0) containing the membrane proton channel, linked together by a central stalk and a peripheral stalk. During catalysis, ATP synthesis in the catalytic domain of F(1) is coupled via a rotary mechanism of the central stalk subunits to proton translocation. Component of the F(0) channel, it forms part of the peripheral stalk, linking F(1) to F(0). The polypeptide is ATP synthase subunit b (Saccharopolyspora erythraea (strain ATCC 11635 / DSM 40517 / JCM 4748 / NBRC 13426 / NCIMB 8594 / NRRL 2338)).